A 250-amino-acid polypeptide reads, in one-letter code: uncharacterized protein (250 aa).

Positions 182–205 (HTPIVSIQTPPPPAPTPNRPDVPA) are disordered. The segment covering 190–201 (TPPPPAPTPNRP) has biased composition (pro residues). Residues 230–250 (TRISVIPLLSVLLLVIIIILL) form a helical membrane-spanning segment.

Belongs to the ascovirus HvAV ORF18 family.

The protein resides in the membrane. This is an uncharacterized protein from Spodoptera frugiperda ascovirus 1a (SfAV-1a).